The sequence spans 474 residues: RNA-binding protein Nova-1 (474 aa).

A compositionally biased stretch (polar residues) spans 1-12; it reads MAAAPIQQNGTH. A disordered region spans residues 1–43; it reads MAAAPIQQNGTHTGVPIDLDPPDSRKRPLEAPPEAGSTKRTNT. The Bipartite nuclear localization signal motif lies at 26–42; sequence KRPLEAPPEAGSTKRTN. KH domains lie at 48-115, 146-212, and 396-463; these read QYFL…HGFI, IKQV…VELI, and KDVV…QYLI. Residues 394 to 474 are required for RNA binding; it reads GSKDVVEIAV…QRITYEQGVR (81 aa).

Interacts with PTBP2; the interaction is direct.

Its subcellular location is the nucleus. Functionally, functions to regulate alternative splicing in neurons by binding pre-mRNA in a sequence-specific manner to activate exon inclusion or exclusion. It binds specifically to the sequences 5'-YCAY-3' and regulates splicing in only a subset of regulated exons. Binding to an exonic 5'-YCAY-3' cluster changes the protein complexes assembled on pre-mRNA, blocking U1 snRNP binding and exon inclusion, whereas binding to an intronic 5'-YCAY-3' cluster enhances spliceosome assembly and exon inclusion. Binding to 5'-YCAY-3' clusters results in a local and asymmetric action to regulate spliceosome assembly and alternative splicing in neurons. Binding to an exonic 5'-YCAY-3' cluster changed the protein complexes assembled on pre-mRNA, blocking U1 snRNP (small nuclear ribonucleoprotein) binding and exon inclusion, whereas binding to an intronic 5'-YCAY-3' cluster enhanced spliceosome assembly and exon inclusion. With NOVA1, they perform unique biological functions in different brain areas and cell types. Autoregulates its own expression by acting as a splicing repressor. Acts to activate the inclusion of exon E3A in the glycine receptor alpha-2 chain and of exon E9 in gamma-aminobutyric-acid receptor gamma-2 subunit via a distal downstream UCAU-rich intronic splicing enhancer. Acts to regulate a novel glycine receptor alpha-2 chain splice variant (alpha-2N) in developing spinal cord. This Rattus norvegicus (Rat) protein is RNA-binding protein Nova-1.